Consider the following 468-residue polypeptide: ATP synthase subunit beta (468 aa).

Position 155 to 162 (155 to 162) interacts with ATP; that stretch reads GGAGVGKT.

Belongs to the ATPase alpha/beta chains family. In terms of assembly, F-type ATPases have 2 components, CF(1) - the catalytic core - and CF(0) - the membrane proton channel. CF(1) has five subunits: alpha(3), beta(3), gamma(1), delta(1), epsilon(1). CF(0) has three main subunits: a(1), b(2) and c(9-12). The alpha and beta chains form an alternating ring which encloses part of the gamma chain. CF(1) is attached to CF(0) by a central stalk formed by the gamma and epsilon chains, while a peripheral stalk is formed by the delta and b chains.

Its subcellular location is the cell membrane. It catalyses the reaction ATP + H2O + 4 H(+)(in) = ADP + phosphate + 5 H(+)(out). In terms of biological role, produces ATP from ADP in the presence of a proton gradient across the membrane. The catalytic sites are hosted primarily by the beta subunits. The chain is ATP synthase subunit beta from Streptococcus pneumoniae (strain Taiwan19F-14).